The primary structure comprises 488 residues: MGMAENTNGMEEGTLEIGMEYRTVSGVAGPLVILDKVKGPKYQEIVNIRLGDGTTRRGQVLEVDGEKAVVQVFEGTSGIDNKYTTVQFTGEVLKTPVSLDMLGRIFNGSGKPIDNGPPILPEAYLDISGSSINPSERTYPEEMIQTGISTIDVMNSIARGQKIPLFSAAGLPHNEIAAQICRQAGLVKRLEKTGDLLEDGEEDNFAIVFAAMGVNMETAQFFKRDFEENGSMERVTLFLNLANDPTIERIITPRIALTTAEYLAYECGKHVLVILTDMSSYADALREVSAAREEVPGRRGYPGYMYTDLATIYERAGRIEGRKGSITQIPILTMPNDDITHPTPDLTGYITEGQIYIDRQLHNRQIYPPINVLPSLSRLMKSAIGEGMTRRDHADVSNQLYANYAIGKDVQAMKAVVGEEALSSEDLLYLEFLDKFERKVVTQGAYDTRNIFQSLDLAWTLLRIFPRELLHRIPAKTHDQYYSRDAGN.

Belongs to the ATPase alpha/beta chains family. V-ATPase is a heteromultimeric enzyme composed of a peripheral catalytic V1 complex (main components: subunits A, B, C, D, E, and F) attached to an integral membrane V0 proton pore complex (main component: the proteolipid protein).

Its function is as follows. Non-catalytic subunit of the peripheral V1 complex of vacuolar ATPase. V-ATPase is responsible for acidifying a variety of intracellular compartments in eukaryotic cells. The sequence is that of V-type proton ATPase subunit B 1 from Gossypium hirsutum (Upland cotton).